The following is a 665-amino-acid chain: Methionine--tRNA ligase (665 aa).

A 'HIGH' region motif is present at residues Tyr12 to Ser22. A 'KMSKS' region motif is present at residues Lys308 to Ser312. Residue Lys311 participates in ATP binding. One can recognise a tRNA-binding domain in the interval Thr562–Gly665.

Belongs to the class-I aminoacyl-tRNA synthetase family. MetG type 2B subfamily. Homodimer.

The protein resides in the cytoplasm. It catalyses the reaction tRNA(Met) + L-methionine + ATP = L-methionyl-tRNA(Met) + AMP + diphosphate. Its function is as follows. Is required not only for elongation of protein synthesis but also for the initiation of all mRNA translation through initiator tRNA(fMet) aminoacylation. This chain is Methionine--tRNA ligase (metG), found in Streptococcus pyogenes serotype M6 (strain ATCC BAA-946 / MGAS10394).